A 206-amino-acid chain; its full sequence is RNA pyrophosphohydrolase (206 aa).

The 144-residue stretch at 6–149 (GYRPNVGIVL…KRGVYARALR (144 aa)) folds into the Nudix hydrolase domain. A Nudix box motif is present at residues 38 to 59 (GGMNTDETPVEAMYRELQEETG). The segment at 175–206 (MPGHTAGHDRPRKRPRSRGYWPKKAQGDVPPT) is disordered.

Belongs to the Nudix hydrolase family. RppH subfamily. A divalent metal cation is required as a cofactor.

Its function is as follows. Accelerates the degradation of transcripts by removing pyrophosphate from the 5'-end of triphosphorylated RNA, leading to a more labile monophosphorylated state that can stimulate subsequent ribonuclease cleavage. This Stenotrophomonas maltophilia (strain R551-3) protein is RNA pyrophosphohydrolase.